We begin with the raw amino-acid sequence, 555 residues long: Membrane protein insertase YidC (555 aa).

The next 5 membrane-spanning stretches (helical) occupy residues 7 to 24 (VLWVIFFMSAVMLYDNWQ), 367 to 387 (WGWSIVLLTLLIKAVFFPLSA), 437 to 457 (LPVVIQIPVFISLYWVLLASV), 476 to 496 (PFFILPVLMAVSMYVQTSLNP), and 511 to 531 (PIAFSVMFFFFPAGLVLYYVV).

Belongs to the OXA1/ALB3/YidC family. Type 1 subfamily. Interacts with the Sec translocase complex via SecD. Specifically interacts with transmembrane segments of nascent integral membrane proteins during membrane integration.

The protein localises to the cell inner membrane. In terms of biological role, required for the insertion and/or proper folding and/or complex formation of integral membrane proteins into the membrane. Involved in integration of membrane proteins that insert both dependently and independently of the Sec translocase complex, as well as at least some lipoproteins. Aids folding of multispanning membrane proteins. This Burkholderia lata (strain ATCC 17760 / DSM 23089 / LMG 22485 / NCIMB 9086 / R18194 / 383) protein is Membrane protein insertase YidC.